A 1009-amino-acid polypeptide reads, in one-letter code: Rho GTPase-activating protein gacT (1009 aa).

Disordered stretches follow at residues 1 to 72 (MKNI…SRNH) and 89 to 117 (TSHH…QQTQ). Basic and acidic residues predominate over residues 12–23 (FHKDKKEGDKQD). The span at 26 to 35 (GSSGSSGNSG) shows a compositional bias: low complexity. Positions 58–69 (ESYSGDNSPTLS) are enriched in polar residues. A compositionally biased stretch (basic residues) spans 89–103 (TSHHSHSHNHNHNHN). Positions 104-117 (HQLTQPIQQQQQTQ) are enriched in low complexity. Residues 163–351 (VPLTQVPCRA…EVFPQHHLYY (189 aa)) enclose the Rho-GAP domain. 3 disordered regions span residues 388 to 420 (TISG…DSTA), 432 to 482 (PEQQ…TFRV), and 508 to 571 (GPSG…TTDQ). Low complexity-rich tracts occupy residues 394–415 (PSNG…ITSP), 432–468 (PEQQ…QPIS), and 512–521 (TTGTTPNGGS). Positions 522-546 (LSIGGGNGGNGGSSLSVGSGGGNGG) are enriched in gly residues. Residues 547-557 (SSLSVGSNTSV) show a composition bias toward low complexity. Residues 580-656 (AYTNNEDTKA…IEREIEKKRL (77 aa)) adopt a coiled-coil conformation. The segment at 686–713 (ISTIDGSGGSNRNSKNYGNGSSSSSNRR) is disordered. A compositionally biased stretch (low complexity) spans 695–713 (SNRNSKNYGNGSSSSSNRR). Positions 715-743 (SNTINQQLQMQLQQLQIQQQQYQQTQQSQ) form a coiled coil. The segment at 759–781 (TTTTTTTSSGSNRFSSNRYKPVD) is disordered. Polar residues predominate over residues 766–781 (SSGSNRFSSNRYKPVD). Residues 839-952 (ENLVLLQQQY…IEEIHLLETY (114 aa)) are a coiled coil. The disordered stretch occupies residues 965–1009 (STTKDLLTRSRSPTLPSSINMSTSSLGSSSSSAYNNNNNNNNVPK). Polar residues predominate over residues 967 to 980 (TKDLLTRSRSPTLP). The span at 981-1009 (SSINMSTSSLGSSSSSAYNNNNNNNNVPK) shows a compositional bias: low complexity.

Its subcellular location is the cytoplasm. Rho GTPase-activating protein involved in the signal transduction pathway. In Dictyostelium discoideum (Social amoeba), this protein is Rho GTPase-activating protein gacT (gacT).